The primary structure comprises 270 residues: 2-epi-5-epi-valiolone 7-phosphate 2-epimerase (270 aa).

Catalysis depends on proton donor/acceptor residues Glu143 and Glu236.

This sequence belongs to the hyi family.

The catalysed reaction is 2-epi-5-epi-valiolone 7-phosphate = 5-epi-valiolone 7-phosphate. Involved in the biosynthesis of the alpha-glucosidase inhibitor acarbose. Catalyzes the 2-epimerisation of 2-epi-5-epivaliolone 7-phosphate to yield 5-epi-valiolone 7-phosphate. In Actinoplanes sp. (strain ATCC 31044 / CBS 674.73 / SE50/110), this protein is 2-epi-5-epi-valiolone 7-phosphate 2-epimerase (acbO).